The following is a 214-amino-acid chain: ER lumen protein-retaining receptor 3 (214 aa).

Residues 1 to 4 are Lumenal-facing; the sequence is MNVF. The chain crosses the membrane as a helical span at residues 5–24; the sequence is RISGDVSHLLAIIILLLKMW. Residues 25-32 lie on the Cytoplasmic side of the membrane; sequence KSKSCAGI. Residues 33–52 traverse the membrane as a helical segment; the sequence is SGKSQLLFALVFTTRYLDLF. Positions 47–48 are interaction with the K-D-E-L motif on target proteins; that stretch reads RY. Residues 53–58 are Lumenal-facing; it reads TVFISA. The chain crosses the membrane as a helical span at residues 59 to 79; that stretch reads YNTVMKIVFLVCAYVTVYLIY. The Cytoplasmic portion of the chain corresponds to 80 to 92; that stretch reads GKFRKAYDSENDT. A helical membrane pass occupies residues 93 to 110; it reads FRLEFLLVPVIGLSFLEN. At 111 to 116 the chain is on the lumenal side; the sequence is YEFTPL. Residues 117–135 traverse the membrane as a helical segment; that stretch reads EILWTFSIYLESVAILPQL. The Cytoplasmic portion of the chain corresponds to 136 to 149; sequence FMISKTGEAESITT. Residues 150 to 168 traverse the membrane as a helical segment; sequence HYLFFLGLYRVLYLANWIW. The segment at 159 to 169 is interaction with the K-D-E-L motif on target proteins; it reads RVLYLANWIWR. The Lumenal portion of the chain corresponds to 169-178; the sequence is RYHTEKFYDQ. A helical transmembrane segment spans residues 179–199; the sequence is IAVVSGVVQTIFYFDFFYLYI. At 200 to 214 the chain is on the cytoplasmic side; that stretch reads TKVLKGKKLSLPMPV. The tract at residues 204–207 is important for recycling of cargo proteins with the sequence motif K-D-E-L from the Golgi to the endoplasmic reticulum; it reads KGKK.

This sequence belongs to the ERD2 family.

It is found in the endoplasmic reticulum membrane. The protein localises to the golgi apparatus membrane. The protein resides in the cytoplasmic vesicle. Its subcellular location is the COPI-coated vesicle membrane. In terms of biological role, receptor for the C-terminal sequence motif K-D-E-L that is present on endoplasmic reticulum resident proteins and that mediates their recycling from the Golgi back to the endoplasmic reticulum. The protein is ER lumen protein-retaining receptor 3 (kdelr3) of Xenopus tropicalis (Western clawed frog).